A 286-amino-acid polypeptide reads, in one-letter code: Phosphatidylglycerol--prolipoprotein diacylglyceryl transferase (286 aa).

A run of 4 helical transmembrane segments spans residues 25 to 45, 65 to 85, 103 to 123, and 127 to 147; these read WYAL…RMLL, FILW…VLFY, GGMS…LFGW, and VPIL…LFLG. Residue Arg-148 participates in a 1,2-diacyl-sn-glycero-3-phospho-(1'-sn-glycerol) binding. 3 helical membrane-spanning segments follow: residues 188–208, 212–232, and 248–268; these read AGLE…AGAL, GLII…GEFF, and MGML…ITTW.

This sequence belongs to the Lgt family.

It is found in the cell inner membrane. The enzyme catalyses L-cysteinyl-[prolipoprotein] + a 1,2-diacyl-sn-glycero-3-phospho-(1'-sn-glycerol) = an S-1,2-diacyl-sn-glyceryl-L-cysteinyl-[prolipoprotein] + sn-glycerol 1-phosphate + H(+). The protein operates within protein modification; lipoprotein biosynthesis (diacylglyceryl transfer). In terms of biological role, catalyzes the transfer of the diacylglyceryl group from phosphatidylglycerol to the sulfhydryl group of the N-terminal cysteine of a prolipoprotein, the first step in the formation of mature lipoproteins. This Rhodopseudomonas palustris (strain ATCC BAA-98 / CGA009) protein is Phosphatidylglycerol--prolipoprotein diacylglyceryl transferase.